The following is an 89-amino-acid chain: Dynein light chain 2, cytoplasmic (89 aa).

This sequence belongs to the dynein light chain family. In terms of assembly, homodimer. The cytoplasmic dynein 1 complex consists of two catalytic heavy chains (HCs) and a number of non-catalytic subunits which present intermediate chains (ICs), light intermediate chains (LICs) and light chains (LCs); the composition seems to vary in respect to the IC, LIC and LC composition. The heavy chain homodimer serves as a scaffold for the probable homodimeric assembly of the respective non-catalytic subunits. Dynein ICs and LICs bind directly to the HC dimer and the LCs assemble on the IC dimer. Interacts with DYNC1I1. Interacts with BMF. Component of the myosin V motor complex. Interacts with BCAS1. Interacts with Basson/BSN. Interacts with AMBRA1 (via TQT motifs); tethering AMBRA1 to the cytoskeleton. Interacts with IQUB.

Its subcellular location is the cytoplasm. The protein resides in the cytoskeleton. Acts as one of several non-catalytic accessory components of the cytoplasmic dynein 1 complex that are thought to be involved in linking dynein to cargos and to adapter proteins that regulate dynein function. Cytoplasmic dynein 1 acts as a motor for the intracellular retrograde motility of vesicles and organelles along microtubules. May play a role in changing or maintaining the spatial distribution of cytoskeletal structures. This is Dynein light chain 2, cytoplasmic (DYNLL2) from Homo sapiens (Human).